The chain runs to 529 residues: Pre-rRNA-processing protein pro-1 (529 aa).

WD repeat units lie at residues 136 to 175 (AHYQ…SADR) and 287 to 326 (GHSD…CLKV). Residues 416 to 518 (ARNEAAKAEK…LKEINKQMYE (103 aa)) adopt a coiled-coil conformation. A disordered region spans residues 436 to 470 (TLGDDEDDAPEVGNQRRKSGKKNKKNRKNQKKNDF). Residues 450-465 (QRRKSGKKNKKNRKNQ) show a composition bias toward basic residues.

The protein belongs to the WD repeat IPI3/WDR18 family. Component of the PELP1 complex, composed of at least PELP1, TEX10 and WDR18. The complex interacts with pre-60S ribosome particles.

It is found in the nucleus. The protein resides in the nucleolus. The protein localises to the nucleoplasm. In terms of biological role, component of the PELP1 complex involved in the nucleolar steps of 28S rRNA maturation and the subsequent nucleoplasmic transit of the pre-60S ribosomal subunit. Required for processing ITS2 sequences from rRNA intermediates during 26S rRNA maturation. Required in the soma to promote normal proliferation and prevent germline tumor formation. This Caenorhabditis elegans protein is Pre-rRNA-processing protein pro-1.